Here is a 202-residue protein sequence, read N- to C-terminus: Xanthine phosphoribosyltransferase (202 aa).

The xanthine site is built by L20 and N27. 128-132 (ASGGT) lines the 5-phospho-alpha-D-ribose 1-diphosphate pocket. Residue K156 participates in xanthine binding.

Belongs to the purine/pyrimidine phosphoribosyltransferase family. Xpt subfamily. In terms of assembly, homodimer.

The protein localises to the cytoplasm. It carries out the reaction XMP + diphosphate = xanthine + 5-phospho-alpha-D-ribose 1-diphosphate. It functions in the pathway purine metabolism; XMP biosynthesis via salvage pathway; XMP from xanthine: step 1/1. Its function is as follows. Converts the preformed base xanthine, a product of nucleic acid breakdown, to xanthosine 5'-monophosphate (XMP), so it can be reused for RNA or DNA synthesis. The chain is Xanthine phosphoribosyltransferase from Deinococcus geothermalis (strain DSM 11300 / CIP 105573 / AG-3a).